We begin with the raw amino-acid sequence, 267 residues long: Tryptophan synthase alpha chain (267 aa).

Active-site proton acceptor residues include E49 and D60.

This sequence belongs to the TrpA family. In terms of assembly, tetramer of two alpha and two beta chains.

It catalyses the reaction (1S,2R)-1-C-(indol-3-yl)glycerol 3-phosphate + L-serine = D-glyceraldehyde 3-phosphate + L-tryptophan + H2O. It participates in amino-acid biosynthesis; L-tryptophan biosynthesis; L-tryptophan from chorismate: step 5/5. In terms of biological role, the alpha subunit is responsible for the aldol cleavage of indoleglycerol phosphate to indole and glyceraldehyde 3-phosphate. The protein is Tryptophan synthase alpha chain of Solibacter usitatus (strain Ellin6076).